Consider the following 154-residue polypeptide: Leghemoglobin-2 (154 aa).

Residues 3–151 (ALTESQAALV…LAIVIKKEMN (149 aa)) form the Globin domain. Position 46 (Ser46) interacts with heme b. Ser46 bears the Phosphoserine mark. His64 provides a ligand contact to O2. Heme b contacts are provided by Lys67, His98, and Lys101. Tyr139 carries the nitrated tyrosine modification.

This sequence belongs to the plant globin family. In terms of assembly, monomer. Nitrated in effective nodules and particularly in hypoxic conditions; this mechanism may play a protective role in the symbiosis by buffering toxic peroxynitrite NO(2)(-). Nitration level decrease during nodule senescence. In terms of processing, phosphorylation at Ser-46 disrupts the molecular environment of its porphyrin ring oxygen binding pocket, thus leading to a reduced oxygen consumption and to the delivery of oxygen O(2) to symbiosomes. Root nodules.

The protein localises to the cytoplasm. Its subcellular location is the cytosol. It localises to the nucleus. Leghemoglobin that reversibly binds oxygen O(2) through a pentacoordinated heme iron. In root nodules, facilitates the diffusion of oxygen to the bacteroids while preventing the bacterial nitrogenase from being inactivated by buffering dioxygen, nitric oxide and carbon monoxide, and promoting the formation of reactive oxygen species (ROS, e.g. H(2)O(2)). This role is essential for symbiotic nitrogen fixation (SNF). In Lupinus luteus (European yellow lupine), this protein is Leghemoglobin-2.